The following is a 156-amino-acid chain: Calglandulin (156 aa).

EF-hand domains follow at residues 8–43, 44–79, 82–117, and 118–153; these read EQIT…VGIN, PTKR…YHEK, NQDE…AGEP, and LNEQ…ESFK. Residues D131, D133, D135, T137, and E142 each coordinate Ca(2+).

The protein belongs to the calmodulin family. Calglandulin subfamily. In terms of tissue distribution, expressed by the venom gland.

Its subcellular location is the cytoplasm. Functionally, may be involved in the cellular control mechanism of the secretion of toxins from the gland into the venom. The chain is Calglandulin from Bothrops insularis (Golden lancehead).